We begin with the raw amino-acid sequence, 184 residues long: Phosphonoformate cytidylyltransferase (184 aa).

It carries out the reaction phosphonoformate + CTP = CMP-5'-phosphonoformate + diphosphate. It functions in the pathway secondary metabolite biosynthesis; bialaphos biosynthesis. In terms of biological role, catalyzes the displacement of the beta- and gamma-phosphates of CTP by phosphonoformate to produce CMP-5'-phosphonoformate, an intermediate in the biosynthesis of phosphinothricin tripeptide (PTT), also known as bialaphos (BA), a natural-product antibiotic and potent herbicide. This chain is Phosphonoformate cytidylyltransferase, found in Streptomyces viridochromogenes (strain DSM 40736 / JCM 4977 / BCRC 1201 / Tue 494).